A 249-amino-acid chain; its full sequence is DNA repair protein RecO (249 aa).

It belongs to the RecO family.

In terms of biological role, involved in DNA repair and RecF pathway recombination. In Leptospira biflexa serovar Patoc (strain Patoc 1 / Ames), this protein is DNA repair protein RecO.